A 172-amino-acid chain; its full sequence is MRNLILVGPMGAGKSTIGRLLAKELRLPFKDSDKEIELRTGANIPWIFDKEGEPGFRDREQAMIAELCAADGVVLATGGGAVMRSENRHALRAGGRVVYLHASIEQQVGRTARDRNRPLLRTADPARVLSELLAIRDPFYREIADIVIETDERPPRMVVLEILARLAELPPR.

Residue 11–16 participates in ATP binding; the sequence is GAGKST. Serine 15 is a Mg(2+) binding site. Residues aspartate 33, arginine 57, and glycine 79 each contribute to the substrate site. Arginine 117 contributes to the ATP binding site. Arginine 136 provides a ligand contact to substrate. Position 153 (arginine 153) interacts with ATP.

It belongs to the shikimate kinase family. Monomer. The cofactor is Mg(2+).

It is found in the cytoplasm. The catalysed reaction is shikimate + ATP = 3-phosphoshikimate + ADP + H(+). It functions in the pathway metabolic intermediate biosynthesis; chorismate biosynthesis; chorismate from D-erythrose 4-phosphate and phosphoenolpyruvate: step 5/7. In terms of biological role, catalyzes the specific phosphorylation of the 3-hydroxyl group of shikimic acid using ATP as a cosubstrate. The protein is Shikimate kinase of Pseudomonas syringae pv. syringae (strain B728a).